Reading from the N-terminus, the 142-residue chain is Large ribosomal subunit protein uL22 (142 aa).

A disordered region spans residues 122–142 (RAEAPEETKPSRGTNKEQKAA).

This sequence belongs to the universal ribosomal protein uL22 family. Part of the 50S ribosomal subunit.

In terms of biological role, this protein binds specifically to 23S rRNA; its binding is stimulated by other ribosomal proteins, e.g. L4, L17, and L20. It is important during the early stages of 50S assembly. It makes multiple contacts with different domains of the 23S rRNA in the assembled 50S subunit and ribosome. Its function is as follows. The globular domain of the protein is located near the polypeptide exit tunnel on the outside of the subunit, while an extended beta-hairpin is found that lines the wall of the exit tunnel in the center of the 70S ribosome. This chain is Large ribosomal subunit protein uL22, found in Gluconobacter oxydans (strain 621H) (Gluconobacter suboxydans).